Here is a 448-residue protein sequence, read N- to C-terminus: Tubulin beta-2 chain (448 aa).

The GTP site is built by glutamine 11, glutamate 69, serine 138, glycine 142, threonine 143, glycine 144, asparagine 204, and asparagine 226. Glutamate 69 serves as a coordination point for Mg(2+). Residues 421–448 (EYQQYQDATADEDGEYEDELDGQEEEDM) are disordered. Acidic residues predominate over residues 429 to 448 (TADEDGEYEDELDGQEEEDM).

The protein belongs to the tubulin family. In terms of assembly, dimer of alpha and beta chains. A typical microtubule is a hollow water-filled tube with an outer diameter of 25 nm and an inner diameter of 15 nM. Alpha-beta heterodimers associate head-to-tail to form protofilaments running lengthwise along the microtubule wall with the beta-tubulin subunit facing the microtubule plus end conferring a structural polarity. Microtubules usually have 13 protofilaments but different protofilament numbers can be found in some organisms and specialized cells. It depends on Mg(2+) as a cofactor.

The protein localises to the cytoplasm. Its subcellular location is the cytoskeleton. Tubulin is the major constituent of microtubules, a cylinder consisting of laterally associated linear protofilaments composed of alpha- and beta-tubulin heterodimers. Microtubules grow by the addition of GTP-tubulin dimers to the microtubule end, where a stabilizing cap forms. Below the cap, tubulin dimers are in GDP-bound state, owing to GTPase activity of alpha-tubulin. The protein is Tubulin beta-2 chain (TUBB2) of Eleusine indica (Goosegrass).